The chain runs to 131 residues: Aspartate 1-decarboxylase (131 aa).

Serine 25 functions as the Schiff-base intermediate with substrate; via pyruvic acid in the catalytic mechanism. At serine 25 the chain carries Pyruvic acid (Ser). Threonine 57 contributes to the substrate binding site. Tyrosine 58 (proton donor) is an active-site residue. Residue 73–75 participates in substrate binding; sequence GAA.

It belongs to the PanD family. In terms of assembly, heterooctamer of four alpha and four beta subunits. The cofactor is pyruvate. Is synthesized initially as an inactive proenzyme, which is activated by self-cleavage at a specific serine bond to produce a beta-subunit with a hydroxyl group at its C-terminus and an alpha-subunit with a pyruvoyl group at its N-terminus.

It is found in the cytoplasm. The enzyme catalyses L-aspartate + H(+) = beta-alanine + CO2. The protein operates within cofactor biosynthesis; (R)-pantothenate biosynthesis; beta-alanine from L-aspartate: step 1/1. Catalyzes the pyruvoyl-dependent decarboxylation of aspartate to produce beta-alanine. The polypeptide is Aspartate 1-decarboxylase (Anaeromyxobacter dehalogenans (strain 2CP-C)).